Reading from the N-terminus, the 503-residue chain is MELIPNLSIETWVLLVTSLVLFYIYGTYSHGLFKKLGIPGPKPLPLLGTIFNYYDGMWKFDEDCYKKYGKIWGFYEGPQPILAIMDPEIIKIVLVKECYSVFTNRRFFGPVGFMKKAITISEDEEWKRLRTLLSPTFTSGKLKEMFPIMRQYGDILVRNLRREEEKGEPISMKDIFGAYSMDVITGTSFGVNVDSLNNPQDPFVQKAKKILKFKIFDPFLLSIILFPFLTPIYEMLNFSIFPRDSMNFFKKFVKRMKKERLASNQKNRVDFLQLMMNTQNSKGQESQKALSDLEMAAQAVIFIFGGYDATSTSISLIMYELATHPDVQKKLQDEIDRTLPNKAPVTYDALMDMEYLDMVVNESLRLYPIAIRLERVSKKDVEINGVFIPKGTVVMIPIYPLHRNPEYWPEPQEFCPERFSKENKGNIDPYIYMPFGNGPRNCIGMRFALISIKLAVIGVLQNFTVQPCEETQIPLKISREPIFQPEKPIILKVVSRDKPRTGS.

Cys-442 serves as a coordination point for heme.

It belongs to the cytochrome P450 family. The cofactor is heme.

The protein resides in the endoplasmic reticulum membrane. It localises to the microsome membrane. It carries out the reaction an organic molecule + reduced [NADPH--hemoprotein reductase] + O2 = an alcohol + oxidized [NADPH--hemoprotein reductase] + H2O + H(+). Functionally, cytochromes P450 are a group of heme-thiolate monooxygenases. In liver microsomes, this enzyme is involved in an NADPH-dependent electron transport pathway. It oxidizes a variety of structurally unrelated compounds, including steroids, fatty acids, and xenobiotics. The chain is Cytochrome P450 3A25 (Cyp3a25) from Mus musculus (Mouse).